The sequence spans 111 residues: Cytochrome c (111 aa).

An N-acetylalanine modification is found at A1. Residues C22, C25, and H26 each contribute to the heme c site. K80 carries the post-translational modification N6,N6,N6-trimethyllysine. M88 is a binding site for heme c. At K94 the chain carries N6,N6,N6-trimethyllysine.

This sequence belongs to the cytochrome c family. Post-translationally, binds 1 heme c group covalently per subunit.

Its subcellular location is the mitochondrion intermembrane space. Its function is as follows. Electron carrier protein. The oxidized form of the cytochrome c heme group can accept an electron from the heme group of the cytochrome c1 subunit of cytochrome reductase. Cytochrome c then transfers this electron to the cytochrome oxidase complex, the final protein carrier in the mitochondrial electron-transport chain. In Cannabis sativa (Hemp), this protein is Cytochrome c.